The following is a 150-amino-acid chain: Globin-2 A chain (150 aa).

Residue V2 is modified to Blocked amino end (Val). Residues 10–150 (CGSEAIKANL…ALVGVVQAAL (141 aa)) form the Globin domain. H102 serves as a coordination point for heme b.

It belongs to the globin family. Heterotetramer of two alpha chains and two beta chains.

The protein is Globin-2 A chain of Anadara inaequivalvis (Inequivalve ark).